The chain runs to 224 residues: Probable GTP-binding protein EngB (224 aa).

The EngB-type G domain maps to 27-201 (SGIEVAFAGR…DAIICQWLEQ (175 aa)). Residues 35–42 (GRSNAGKS), 62–66 (GRTQL), 80–83 (DLPG), 147–150 (TKCD), and 180–182 (FSS) contribute to the GTP site. Ser-42 and Thr-64 together coordinate Mg(2+). Positions 205–224 (EYELPEEDDFDDSDEFTEEE) are disordered.

This sequence belongs to the TRAFAC class TrmE-Era-EngA-EngB-Septin-like GTPase superfamily. EngB GTPase family. Mg(2+) is required as a cofactor.

Its function is as follows. Necessary for normal cell division and for the maintenance of normal septation. This is Probable GTP-binding protein EngB from Colwellia psychrerythraea (strain 34H / ATCC BAA-681) (Vibrio psychroerythus).